A 138-amino-acid chain; its full sequence is Large-conductance mechanosensitive channel (138 aa).

3 helical membrane passes run V15 to V35, I38 to Q58, and G80 to V100.

Belongs to the MscL family. As to quaternary structure, homopentamer.

Its subcellular location is the cell inner membrane. Functionally, channel that opens in response to stretch forces in the membrane lipid bilayer. May participate in the regulation of osmotic pressure changes within the cell. In Brucella canis (strain ATCC 23365 / NCTC 10854 / RM-666), this protein is Large-conductance mechanosensitive channel.